A 380-amino-acid chain; its full sequence is GDSL esterase/lipase At3g26430 (380 aa).

The first 25 residues, 1–25, serve as a signal peptide directing secretion; the sequence is METNLLLVKCVLLASCLIHPRACSP. Ser38 serves as the catalytic Nucleophile. Asn97, Asn115, and Asn183 each carry an N-linked (GlcNAc...) asparagine glycan. Catalysis depends on residues Asp346 and His349.

This sequence belongs to the 'GDSL' lipolytic enzyme family.

The protein resides in the secreted. It carries out the reaction hexadecanoate ester + H2O = an aliphatic alcohol + hexadecanoate + H(+). It catalyses the reaction a butanoate ester + H2O = an aliphatic alcohol + butanoate + H(+). Lipase activity is inhibited by phenylmethylsulfonyl fluoride (PMSF), but not neostigmine bromide (NB). Lipase that can hydrolyze p-nitrophenyl butyrate and p-nitrophenyl palmitate in vitro. Possesses low activity against p-nitrophenyl acetate. Substrate preference is p-nitrophenyl palmitate &gt; p-nitrophenyl butyrate &gt;&gt; p-nitrophenyl acetate. Lacks cholinesterase activity. The sequence is that of GDSL esterase/lipase At3g26430 from Arabidopsis thaliana (Mouse-ear cress).